The sequence spans 506 residues: Aminoaldehyde dehydrogenase 1b (506 aa).

Asp-102 contacts Na(+). NAD(+)-binding positions include 162 to 164 (TPW) and 188 to 191 (KPSE). Leu-192 serves as a coordination point for Na(+). Residues 242-245 (SFET) and Glu-263 each bind NAD(+). Glu-263 acts as the Proton acceptor in catalysis. The Nucleophile role is filled by Cys-297. Residues Glu-396 and Trp-462 each contribute to the NAD(+) site.

The protein belongs to the aldehyde dehydrogenase family.

The enzyme catalyses 4-aminobutanal + NAD(+) + H2O = 4-aminobutanoate + NADH + 2 H(+). It catalyses the reaction 3-aminopropanal + NAD(+) + H2O = beta-alanine + NADH + 2 H(+). It carries out the reaction 4-(trimethylamino)butanal + NAD(+) + H2O = 4-(trimethylamino)butanoate + NADH + 2 H(+). The catalysed reaction is 4-guanidinobutanal + NAD(+) + H2O = 4-guanidinobutanoate + NADH + 2 H(+). The enzyme catalyses betaine aldehyde + NAD(+) + H2O = glycine betaine + NADH + 2 H(+). The protein operates within amine and polyamine biosynthesis; betaine biosynthesis via choline pathway; betaine from betaine aldehyde: step 1/1. Functionally, dehydrogenase that catalyzes the oxidation of several aminoaldehydes. Metabolizes and detoxifies aldehyde products of polyamine degradation to non-toxic amino acids. Catalyzes the oxidation of 4-aminobutanal and 3-aminopropanal to 4-aminobutanoate and beta-alanine, respectively. Catalyzes the oxidation of 4-(trimethylamino)butanal and 4-guanidinobutanal to 4-trimethylammoniobutanoate and 4-guanidinobutanoate, respectively. Catalyzes the oxidation of betaine aldehyde to glycine betaine. The chain is Aminoaldehyde dehydrogenase 1b from Zea mays (Maize).